We begin with the raw amino-acid sequence, 444 residues long: MRKEWVEKRKKDSVRTQMYYARQGIVTEEMEYVAKVEGLDPELIRKEVARGRMIIPANINHLHQKPMAIGIAAKCKINANIGSSALASDAAGEVEKVKVCQKYGADTIMDLSTGGDLDAIREEVIKHAEVPIGTVPIYQILHDCNNKIEDLTIDKMLEVIERQAQQGVSYFTIHAGFLLRFMPLVAKRKMGIVSRGGSLMAAWMMHYHKENPFYTAFDDILDICRKYDVSLSLGDSLRPGCLADASDDAQLEELKVLGELTLKAWDKDVQVMIEGPGHVPMNQIERNIKIERDYCHEAPFYVLGPLVTDIAAGYDHLASAIGAAMAGWYGASMLCYVTPKEHLGLPNAEDVREGIVAYKIAAHAADIARGRKGARDVDDAMSDARYKFDWNKQFELALDPDRAREYHDETLPQDVFKEAEFCSMCGPKFCSYKITQDILEKHGA.

Residues asparagine 80, methionine 109, tyrosine 138, histidine 174, 194-196, 235-238, and glutamate 274 contribute to the substrate site; these read SRG and DSLR. A Zn(2+)-binding site is contributed by histidine 278. Residue tyrosine 301 coordinates substrate. Residue histidine 342 coordinates Zn(2+). [4Fe-4S] cluster contacts are provided by cysteine 422, cysteine 425, and cysteine 430.

The protein belongs to the ThiC family. As to quaternary structure, homodimer. It depends on [4Fe-4S] cluster as a cofactor.

It catalyses the reaction 5-amino-1-(5-phospho-beta-D-ribosyl)imidazole + S-adenosyl-L-methionine = 4-amino-2-methyl-5-(phosphooxymethyl)pyrimidine + CO + 5'-deoxyadenosine + formate + L-methionine + 3 H(+). The protein operates within cofactor biosynthesis; thiamine diphosphate biosynthesis. Functionally, catalyzes the synthesis of the hydroxymethylpyrimidine phosphate (HMP-P) moiety of thiamine from aminoimidazole ribotide (AIR) in a radical S-adenosyl-L-methionine (SAM)-dependent reaction. This is Phosphomethylpyrimidine synthase from Nitratiruptor sp. (strain SB155-2).